Consider the following 205-residue polypeptide: Holliday junction branch migration complex subunit RuvA (205 aa).

The domain I stretch occupies residues 1–64 (MIGRLRGVLV…EDAQLLYGFI (64 aa)). Residues 65–143 (TKQERALFRL…SLLETSAGSE (79 aa)) form a domain II region. The flexible linker stretch occupies residues 144–156 (REFMLKSNYTPAP). The segment at 157–205 (VVNTAEEDAIAALLSLGYKPAQASKAVSAAFKEGMSSEDLIKSSLKSML) is domain III.

The protein belongs to the RuvA family. In terms of assembly, homotetramer. Forms an RuvA(8)-RuvB(12)-Holliday junction (HJ) complex. HJ DNA is sandwiched between 2 RuvA tetramers; dsDNA enters through RuvA and exits via RuvB. An RuvB hexamer assembles on each DNA strand where it exits the tetramer. Each RuvB hexamer is contacted by two RuvA subunits (via domain III) on 2 adjacent RuvB subunits; this complex drives branch migration. In the full resolvosome a probable DNA-RuvA(4)-RuvB(12)-RuvC(2) complex forms which resolves the HJ.

It localises to the cytoplasm. The RuvA-RuvB-RuvC complex processes Holliday junction (HJ) DNA during genetic recombination and DNA repair, while the RuvA-RuvB complex plays an important role in the rescue of blocked DNA replication forks via replication fork reversal (RFR). RuvA specifically binds to HJ cruciform DNA, conferring on it an open structure. The RuvB hexamer acts as an ATP-dependent pump, pulling dsDNA into and through the RuvAB complex. HJ branch migration allows RuvC to scan DNA until it finds its consensus sequence, where it cleaves and resolves the cruciform DNA. This Shewanella woodyi (strain ATCC 51908 / MS32) protein is Holliday junction branch migration complex subunit RuvA.